The sequence spans 288 residues: 4-diphosphocytidyl-2-C-methyl-D-erythritol kinase (288 aa).

Lysine 13 is a catalytic residue. Position 96-106 (96-106 (PIGGGIGGGSS)) interacts with ATP. Aspartate 138 is an active-site residue.

Belongs to the GHMP kinase family. IspE subfamily.

The catalysed reaction is 4-CDP-2-C-methyl-D-erythritol + ATP = 4-CDP-2-C-methyl-D-erythritol 2-phosphate + ADP + H(+). It functions in the pathway isoprenoid biosynthesis; isopentenyl diphosphate biosynthesis via DXP pathway; isopentenyl diphosphate from 1-deoxy-D-xylulose 5-phosphate: step 3/6. Functionally, catalyzes the phosphorylation of the position 2 hydroxy group of 4-diphosphocytidyl-2C-methyl-D-erythritol. The polypeptide is 4-diphosphocytidyl-2-C-methyl-D-erythritol kinase (Aliivibrio salmonicida (strain LFI1238) (Vibrio salmonicida (strain LFI1238))).